We begin with the raw amino-acid sequence, 118 residues long: Large ribosomal subunit protein bL20 (118 aa).

It belongs to the bacterial ribosomal protein bL20 family.

Its function is as follows. Binds directly to 23S ribosomal RNA and is necessary for the in vitro assembly process of the 50S ribosomal subunit. It is not involved in the protein synthesizing functions of that subunit. The polypeptide is Large ribosomal subunit protein bL20 (Pelagibacter ubique (strain HTCC1062)).